A 1349-amino-acid polypeptide reads, in one-letter code: MPAPETGASSREKSLEDLQVATLEKGRSTSSFGADNEKPHDHHSLSDTIMAPPDGKQKDHGKAVDLNDDSLFAHLQEHEKEVLKRQLDAPSVKVSFFTLYRYASRKDILIILVSAICAIAAGAALPLFTILFGSLASAFQGISLGTMPYHEFYHKLTKNVLYFVYLGIAEFVTVYVSTVGFIYTGEHLTQKIRENYLEAILRQNMAYFDKLGAGEVTTRITADTNLIQDAISEKVGLTLTAFATFVTAFIVAYVKYWKLALICTSTIVALVMVMGGGSRFIVKYSKKSIESYGAGGTVAEEVISSIRNATAFGTQDKLAKQYETHLAEAEKWGVKQQVILGMMIGGMFGIMFSNYGLGFWMGSRFVVGKEVNVGQVLTVLMSILIGSFSLGNVAPNGQAFTNGVAAAAKIYSTIDRRSPLDPYSDEGKVLDHFEGNIEFRNVKHIYPSRPEVTVMEDVSLSMPAGKTTALVGPSGSGKSTVVGLVERFYLPVGGQVLLDGHDIQTLNLRWLRQQISLVSQEPVLFSTTIFRNIEHGLIGTKFEHESKDKIRELVENAARMANAHDFIMALPEGYDTNVGQRGFLLSGGQKQRIAIARAIVSDPKILLLDEATSALDTKSEGVVQAALDKAAEGRTTIVIAHRLSTIKTAHNIVAMVGGKIAEQGTHDELVDRKGTYYKLVEAQRINEEKEAEALEADADMDADDFGQEGVTRIKTAVSSSNSLDAVDEKARLEMKRTGTQKSVSSAVLSKKVPEQFEKYSLWTLVKFIGAFNRPELGYMLIGLTFSFLAGGGQPTQAFLYAKAISTLSLPESMFHKLRHDANFWSLMFFVVGIAQFISLSINGTAFAICSERLIRRARSQAFRSILRQDISFFDREENSTGALTSFLSTETKNLSGVSGVTLGTIIMTSTTLGAAMIIALAIGWKLALVCISVVPILLACGFLRFYMLAQFQQRSKSAYEGSASYACEATSAIRTVASLTREQDVWGVYHDQLQKQGRKSLISVLRSSLLYASSQALVFFCVALGFWYGGTLLGHHEYSIFRFFVCFSEILFGAQSAGTVFSFAPDMGKAKNAAAQFKKLFDSKPTIDIWSDEGEKLESMEGEIEFRDVHFRYPTRPEQPVLRGLNLSVKPGQYIALVGPSGCGKSTTIALLERFYDALAGGVFVDGKDITKLNVNSYRSFLSLVSQEPTLYQGTIKENILLGVDKDDVSEETLIKVCKDANIYDFVMSLPEGFDTVVGSKGGMLSGGQKQRVAIARALLRDPKVLLLDEATSALDSESEKVVQAALDAAARGRTTIAVAHRLSTIQNADIIYVFDQGKIVESGTHHELIRNKGRYYELVNLQSLGKTH.

The disordered stretch occupies residues 1 to 62; it reads MPAPETGASS…PDGKQKDHGK (62 aa). Over residues 35–45 the composition is skewed to basic and acidic residues; sequence DNEKPHDHHSL. A run of 4 helical transmembrane segments spans residues 108–128, 162–182, 234–254, and 257–277; these read ILII…LPLF, YFVY…VGFI, KVGL…VAYV, and WKLA…MGGG. An ABC transmembrane type-1 1 domain is found at 112 to 402; the sequence is LVSAICAIAA…VAPNGQAFTN (291 aa). An N-linked (GlcNAc...) asparagine glycan is attached at Asn-308. The next 2 helical transmembrane spans lie at 339–359 and 371–391; these read ILGM…GLGF and VNVG…FSLG. An ABC transporter 1 domain is found at 437–682; it reads IEFRNVKHIY…KGTYYKLVEA (246 aa). 472–479 provides a ligand contact to ATP; the sequence is GPSGSGKS. 2 helical membrane passes run 779–799 and 828–848; these read MLIG…QAFL and FFVV…AFAI. The ABC transmembrane type-1 2 domain occupies 780–1069; the sequence is LIGLTFSFLA…VFSFAPDMGK (290 aa). Residues Asn-878 and Asn-893 are each glycosylated (N-linked (GlcNAc...) asparagine). A run of 4 helical transmembrane segments spans residues 896-916, 926-948, 1016-1036, and 1043-1063; these read GVSG…GAAM, LALV…FYML, ALVF…LGHH, and FFVC…VFSF. Residues 1104–1342 form the ABC transporter 2 domain; it reads IEFRDVHFRY…KGRYYELVNL (239 aa). A glycan (N-linked (GlcNAc...) asparagine) is linked at Asn-1126. 1139–1146 serves as a coordination point for ATP; sequence GPSGCGKS.

Belongs to the ABC transporter superfamily. ABCB family. Multidrug resistance exporter (TC 3.A.1.201) subfamily.

It localises to the cell membrane. It carries out the reaction voriconazole(in) + ATP + H2O = voriconazole(out) + ADP + phosphate + H(+). Functionally, pleiotropic ABC efflux transporter that may be involved in A.fumigatus adaptation to azoles such as vorizonazole. The sequence is that of ABC multidrug transporter mdr1 from Aspergillus fumigatus (strain ATCC MYA-4609 / CBS 101355 / FGSC A1100 / Af293) (Neosartorya fumigata).